Reading from the N-terminus, the 330-residue chain is Phosphate acyltransferase (330 aa).

Belongs to the PlsX family. Homodimer. Probably interacts with PlsY.

Its subcellular location is the cytoplasm. It catalyses the reaction a fatty acyl-[ACP] + phosphate = an acyl phosphate + holo-[ACP]. It functions in the pathway lipid metabolism; phospholipid metabolism. Catalyzes the reversible formation of acyl-phosphate (acyl-PO(4)) from acyl-[acyl-carrier-protein] (acyl-ACP). This enzyme utilizes acyl-ACP as fatty acyl donor, but not acyl-CoA. This Bacillus cereus (strain ATCC 14579 / DSM 31 / CCUG 7414 / JCM 2152 / NBRC 15305 / NCIMB 9373 / NCTC 2599 / NRRL B-3711) protein is Phosphate acyltransferase.